The sequence spans 1659 residues: Daxx-like protein (1659 aa).

2 disordered regions span residues 1–25 (MSAS…RRRL) and 265–336 (QLQQ…VRSL). Residues 438-469 (LGQLQQEQQKILGQLQQQKQQQQQQQKKILGQ) adopt a coiled-coil conformation. Low complexity-rich tracts occupy residues 506–520 (SVGQ…QSQQ), 528–542 (KQQP…VGQF), and 600–625 (GQLQ…QQQQ). Disordered stretches follow at residues 506 to 542 (SVGQ…VGQF), 600 to 645 (GQLQ…TLAG), 658 to 713 (SAGQ…MPQK), 872 to 894 (TLPF…HVQG), 924 to 952 (LPPT…VQQQ), 1023 to 1060 (VESP…QSRA), and 1536 to 1555 (FKIA…EDDD). A compositionally biased stretch (polar residues) spans 626 to 635 (KISAGQLQEH). Low complexity-rich tracts occupy residues 636-645 (SQQQQKTLAG) and 658-698 (SAGQ…QPQQ). Composition is skewed to polar residues over residues 699-711 (RTSA…QQMP) and 885-894 (APMTSTHVQG). Residues 870–1659 (ARTLPFRSSQ…DQIIISDEES (790 aa)) are necessary for interaction with His3.3A and His3.3B. Positions 924–937 (LPPTTSITPQLTPT) are enriched in low complexity. A compositionally biased stretch (acidic residues) spans 1541 to 1555 (DGDDSEEESDSEDDD).

In terms of assembly, interacts with p53 (via C-terminus). Interacts (via C-terminus) with His3.3A and His3.3B. Interacts with asf1. Ubiquitously expressed with higher levels in the head (at protein level). Expressed in the germ line, with prominent expression in primary spermatocytes and meiotic spermatocytes (at protein level). In ovaries, expressed in nurse cells and in the germinal vesicle of the ovarian follicle at stage 10 (at protein level).

It is found in the cytoplasm. The protein resides in the cytosol. It localises to the nucleus. Its subcellular location is the chromosome. Its function is as follows. Transcription regulator. Acts as a histone chaperone that facilitates deposition of histone H3.3. Has a role in chromatin remodeling together with asf1 and XNP. Has role in the transcriptional apoptotic response to oxidative and UV stress. In Drosophila melanogaster (Fruit fly), this protein is Daxx-like protein.